The chain runs to 739 residues: Endoglucanase F (739 aa).

Positions 1–27 are cleaved as a signal peptide; the sequence is MKKILAFLLTVALVAVVAIPQAVVSFA. The interval 28-470 is catalytic; the sequence is ADFNYGEALQ…AKMYEKYGGE (443 aa). The active-site Nucleophile is D84. Catalysis depends on residues H400, D438, and E447. The 160-residue stretch at 480-639 folds into the CBM3 domain; that stretch reads TPGEEFYVEA…NVRVWGKVPD (160 aa). In terms of domain architecture, Dockerin spans 664-737; that stretch reads PGIMLGDVNF…ILKLIEKFPA (74 aa).

Belongs to the glycosyl hydrolase 9 (cellulase E) family. The cofactor is Ca(2+).

The catalysed reaction is Endohydrolysis of (1-&gt;4)-beta-D-glucosidic linkages in cellulose, lichenin and cereal beta-D-glucans.. In terms of biological role, this enzyme catalyzes the endohydrolysis of 1,4-beta-glucosidic linkages in cellulose, lichenin and cereal beta-D-glucans. The protein is Endoglucanase F (celF) of Acetivibrio thermocellus (strain ATCC 27405 / DSM 1237 / JCM 9322 / NBRC 103400 / NCIMB 10682 / NRRL B-4536 / VPI 7372) (Clostridium thermocellum).